We begin with the raw amino-acid sequence, 397 residues long: Succinate--CoA ligase [ADP-forming] subunit beta (397 aa).

The 246-residue stretch at lysine 9–glutamate 254 folds into the ATP-grasp domain. Residues lysine 46, glycine 53–glycine 55, glutamate 109, alanine 112, and glutamate 117 each bind ATP. The Mg(2+) site is built by asparagine 209 and aspartate 223. Substrate contacts are provided by residues asparagine 274 and glycine 331–methionine 333.

It belongs to the succinate/malate CoA ligase beta subunit family. In terms of assembly, heterotetramer of two alpha and two beta subunits. The cofactor is Mg(2+).

It catalyses the reaction succinate + ATP + CoA = succinyl-CoA + ADP + phosphate. The catalysed reaction is GTP + succinate + CoA = succinyl-CoA + GDP + phosphate. It functions in the pathway carbohydrate metabolism; tricarboxylic acid cycle; succinate from succinyl-CoA (ligase route): step 1/1. Its function is as follows. Succinyl-CoA synthetase functions in the citric acid cycle (TCA), coupling the hydrolysis of succinyl-CoA to the synthesis of either ATP or GTP and thus represents the only step of substrate-level phosphorylation in the TCA. The beta subunit provides nucleotide specificity of the enzyme and binds the substrate succinate, while the binding sites for coenzyme A and phosphate are found in the alpha subunit. This Mesorhizobium japonicum (strain LMG 29417 / CECT 9101 / MAFF 303099) (Mesorhizobium loti (strain MAFF 303099)) protein is Succinate--CoA ligase [ADP-forming] subunit beta.